The chain runs to 201 residues: 3-isopropylmalate dehydratase small subunit (201 aa).

Belongs to the LeuD family. LeuD type 1 subfamily. As to quaternary structure, heterodimer of LeuC and LeuD.

The enzyme catalyses (2R,3S)-3-isopropylmalate = (2S)-2-isopropylmalate. It participates in amino-acid biosynthesis; L-leucine biosynthesis; L-leucine from 3-methyl-2-oxobutanoate: step 2/4. Catalyzes the isomerization between 2-isopropylmalate and 3-isopropylmalate, via the formation of 2-isopropylmaleate. This Sinorhizobium medicae (strain WSM419) (Ensifer medicae) protein is 3-isopropylmalate dehydratase small subunit.